We begin with the raw amino-acid sequence, 474 residues long: MFS transporter SAT21 (474 aa).

6 helical membrane-spanning segments follow: residues 7 to 27 (LVLP…LEVP), 64 to 84 (LVVG…ILYF), 101 to 121 (CVGY…HQVF), 131 to 151 (LFLF…AFVA), 162 to 182 (FLFL…ALAT), and 189 to 209 (LFLP…LLQM). Positions 220-252 (KVVGSTSDQTEPFLRSSSNSSQESGTAAPAIDP) are disordered. Polar residues predominate over residues 222 to 244 (VGSTSDQTEPFLRSSSNSSQESG). N-linked (GlcNAc...) asparagine glycosylation is present at Asn-238. 6 helical membrane passes run 276–296 (FICY…AFIF), 315–335 (LALS…ANAT), 346–366 (INIG…IMAW), 374–394 (FIFS…LQGV), 406–426 (SIFA…GPLM), and 445–465 (FLAS…LWAL).

Belongs to the major facilitator superfamily.

It localises to the cell membrane. In terms of biological role, MFS transporter; part of the satratoxin SC3 cluster involved in the biosynthesis of satratoxins, trichothecene mycotoxins that are associated with human food poisonings. Satratoxins are suggested to be made by products of multiple gene clusters (SC1, SC2 and SC3) that encode 21 proteins in all, including polyketide synthases, acetyltransferases, and other enzymes expected to modify the trichothecene skeleton. SC1 encodes 10 proteins, SAT1 to SAT10. The largest are SAT8, which encodes a putative polyketide synthase (PKS) with a conventional non-reducing architecture, and SAT10, a putative protein containing four ankyrin repeats and thus may be involved in protein scaffolding. The putative short-chain reductase SAT3 may assist the PKS in some capacity. SAT6 contains a secretory lipase domain and acts probably as a trichothecene esterase. SAT5 encodes a putative acetyltransferase, and so, with SAT6, may affect endogenous protection from toxicity. The probable transcription factor SAT9 may regulate the expression of the SC1 cluster. SC2 encodes proteins SAT11 to SAT16, the largest of which encodes the putative reducing PKS SAT13. SAT11 is a cytochrome P450 monooxygenase, while SAT14 and SAT16 are probable acetyltransferases. The SC2 cluster may be regulated by the transcription factor SAT15. SC3 is a small cluster that encodes 5 proteins, SAT17 to SAT21. SAT21 is a putative MFS-type transporter which may have a role in exporting secondary metabolites. The four other proteins putatively encoded in SC3 include the taurine hydroxylase-like protein SAT17, the O-methyltransferase SAT18, the acetyltransferase SAT19, and the Cys6-type zinc finger SAT20, the latter being probably involved in regulation of SC3 expression. The protein is MFS transporter SAT21 of Stachybotrys chartarum (strain CBS 109288 / IBT 7711) (Toxic black mold).